An 849-amino-acid polypeptide reads, in one-letter code: Protein translocase subunit SecA (849 aa).

ATP-binding positions include Q85, G103 to T107, and D493. C832, C834, C843, and H844 together coordinate Zn(2+).

Belongs to the SecA family. As to quaternary structure, monomer and homodimer. Part of the essential Sec protein translocation apparatus which comprises SecA, SecYEG and auxiliary proteins SecDF. Other proteins may also be involved. Zn(2+) serves as cofactor.

The protein resides in the cell membrane. The protein localises to the cytoplasm. The enzyme catalyses ATP + H2O + cellular proteinSide 1 = ADP + phosphate + cellular proteinSide 2.. Functionally, part of the Sec protein translocase complex. Interacts with the SecYEG preprotein conducting channel. Has a central role in coupling the hydrolysis of ATP to the transfer of proteins into and across the cell membrane, serving as an ATP-driven molecular motor driving the stepwise translocation of polypeptide chains across the membrane. This Streptococcus thermophilus (strain CNRZ 1066) protein is Protein translocase subunit SecA.